A 388-amino-acid polypeptide reads, in one-letter code: Granulocyte-macrophage colony-stimulating factor receptor subunit alpha (388 aa).

Positions 1 to 29 are cleaved as a signal peptide; that stretch reads MTSSHAMNITPLAQLALLFSTLLLPGTQA. Over 30 to 327 the chain is Extracellular; that stretch reads LLAPTTPDAG…PLEAEDTRVP (298 aa). N-linked (GlcNAc...) asparagine glycans are attached at residues asparagine 43, asparagine 63, asparagine 106, asparagine 132, asparagine 165, and asparagine 237. Residues 228–324 form the Fibronectin type-III domain; the sequence is PPRDVTASCN…PAHPLEAEDT (97 aa). Residues 310–314 carry the WSXWS motif motif; it reads WGEWS. Residues 328 to 348 form a helical membrane-spanning segment; it reads GALLYAVTACAVLLCALALGV. Residues 349 to 388 lie on the Cytoplasmic side of the membrane; that stretch reads TCRRFEVTRRLFPPIPGIRDKVSDDVRVNPETLRKDLLQP. The Box 1 motif signature appears at 359 to 367; the sequence is LFPPIPGIR.

The protein belongs to the type I cytokine receptor family. Type 5 subfamily. In terms of assembly, heterodimer of an alpha and a beta subunit. The beta subunit is common to the IL3, IL5 and GM-CSF receptors. The signaling GM-CSF receptor complex is a dodecamer of two head-to-head hexamers of two alpha, two beta, and two ligand subunits.

It is found in the membrane. Functionally, low affinity receptor for granulocyte-macrophage colony-stimulating factor. Transduces a signal that results in the proliferation, differentiation, and functional activation of hematopoietic cells. The sequence is that of Granulocyte-macrophage colony-stimulating factor receptor subunit alpha (Csf2ra) from Mus musculus (Mouse).